The chain runs to 352 residues: Glycerol-3-phosphate dehydrogenase [NAD(P)+] (352 aa).

Serine 11, tryptophan 12, arginine 32, and lysine 105 together coordinate NADPH. Sn-glycerol 3-phosphate-binding residues include lysine 105, glycine 133, and serine 135. NADPH is bound at residue alanine 137. Sn-glycerol 3-phosphate-binding residues include lysine 188, aspartate 241, serine 251, arginine 252, and asparagine 253. Lysine 188 (proton acceptor) is an active-site residue. Arginine 252 is an NADPH binding site. The NADPH site is built by valine 276 and glutamate 278.

Belongs to the NAD-dependent glycerol-3-phosphate dehydrogenase family.

The protein localises to the cytoplasm. The enzyme catalyses sn-glycerol 3-phosphate + NAD(+) = dihydroxyacetone phosphate + NADH + H(+). It catalyses the reaction sn-glycerol 3-phosphate + NADP(+) = dihydroxyacetone phosphate + NADPH + H(+). The protein operates within membrane lipid metabolism; glycerophospholipid metabolism. Its function is as follows. Catalyzes the reduction of the glycolytic intermediate dihydroxyacetone phosphate (DHAP) to sn-glycerol 3-phosphate (G3P), the key precursor for phospholipid synthesis. The chain is Glycerol-3-phosphate dehydrogenase [NAD(P)+] from Desulfitobacterium hafniense (strain Y51).